A 144-amino-acid polypeptide reads, in one-letter code: Cystatin-F (144 aa).

An N-terminal signal peptide occupies residues Met1–Gly18. Asn61 carries N-linked (GlcNAc...) asparagine glycosylation. The short motif at Gln80–Gly84 is the Secondary area of contact element. Intrachain disulfides connect Cys98-Cys109 and Cys123-Cys143.

Belongs to the cystatin family.

It localises to the secreted. Functionally, inhibits papain and cathepsin L but with affinities lower than other cystatins. May play a role in immune regulation through inhibition of a unique target in the hematopoietic system. The polypeptide is Cystatin-F (Cst7) (Mus musculus (Mouse)).